Consider the following 371-residue polypeptide: Cytochrome b (371 aa).

Helical transmembrane passes span 25 to 45, 69 to 90, 105 to 125, and 170 to 190; these read FGSMLLTCLGLQVLTGFFLAV, WMMQNLHAIGASMFFICIYIHI, WMSGITLLITLMATAFFGYVL, and FFALHFILPFAIISLSSLHII. Residues His-75 and His-89 each coordinate heme b. Residues His-174 and His-188 each coordinate heme b. His-193 is a binding site for a ubiquinone. 4 helical membrane-spanning segments follow: residues 218–238, 280–300, 312–332, and 339–358; these read HKDLLLLTLMIMSLFIISSFF, LGGALALVMSIMILFIIPFTH, LSQLMFWTLVSTFITITWAAT, and FIVISQVTSSLYFTFFLSTP.

The protein belongs to the cytochrome b family. In terms of assembly, the cytochrome bc1 complex contains 3 respiratory subunits (MT-CYB, CYC1 and UQCRFS1), 2 core proteins (UQCRC1 and UQCRC2) and probably 6 low-molecular weight proteins. Heme b serves as cofactor.

Its subcellular location is the mitochondrion inner membrane. Component of the ubiquinol-cytochrome c reductase complex (complex III or cytochrome b-c1 complex) that is part of the mitochondrial respiratory chain. The b-c1 complex mediates electron transfer from ubiquinol to cytochrome c. Contributes to the generation of a proton gradient across the mitochondrial membrane that is then used for ATP synthesis. This Aspidites melanocephalus (Black-headed python) protein is Cytochrome b (MT-CYB).